We begin with the raw amino-acid sequence, 310 residues long: Glutaminase (310 aa).

Residues Ser67, Asn118, Glu161, Asn168, Tyr192, Tyr244, and Val262 each contribute to the substrate site.

It belongs to the glutaminase family. As to quaternary structure, homotetramer.

The catalysed reaction is L-glutamine + H2O = L-glutamate + NH4(+). This Legionella pneumophila (strain Paris) protein is Glutaminase.